A 1025-amino-acid chain; its full sequence is Multidrug resistance protein MdtC (1025 aa).

12 helical membrane passes run 3–23 (FFAL…AITL), 333–353 (EVEQ…FLFL), 360–380 (IIPA…MYLC), 387–407 (LSLM…IVVL), 431–451 (VGFT…PLLL), 463–483 (FAVT…TLTP), 528–548 (LVGM…ISIP), 853–873 (VILI…LYES), 875–895 (VHPL…LLAL), 897–917 (LFNA…IGIV), 953–973 (PIMM…LSGG), and 984–1004 (ITIV…TPVV).

This sequence belongs to the resistance-nodulation-cell division (RND) (TC 2.A.6) family. MdtC subfamily. As to quaternary structure, part of a tripartite efflux system composed of MdtA, MdtB and MdtC. MdtC forms a heteromultimer with MdtB.

Its subcellular location is the cell inner membrane. In terms of biological role, the MdtABC tripartite complex confers resistance against novobiocin and deoxycholate. This Escherichia coli O157:H7 (strain EC4115 / EHEC) protein is Multidrug resistance protein MdtC.